A 424-amino-acid chain; its full sequence is MAKNIQAIRGMNDYLPAETALWQRIENSLKQVLSGYGYNEIRLPIVEQTPLFKRAIGEVTDVVEKEMYTFDDRNGDSLTLRPEGTAGCVRAGIEHGILYNQEQRLWYVGPMFRYERPQKGRYRQFHQLGCEVFGLQGPDIDAELILMTARWWRVLGIADHVKLELNSIGSLDARARYREALVAFLEQHKDQLDEDCLRRMYTNPLRVLDTKNPQIQVLLNDAPVLTDYLDDESREHFEALGELLTQSGIPYTVNPRLVRGLDYYNRTVFEWVTTSLGAQGTVCAGGRYDGMVEQLGGHATPAVGFAMGLERLVLLVQSVNPDFKAQPGVDVYLISSGAGTQVAAMQLAEKLRDALPQLKLMTNYGGGNFKKQFARADKWGARVALVLGENEVAAGQVVVKNLSNGEQDTLAQADVASRLATLLD.

Belongs to the class-II aminoacyl-tRNA synthetase family. As to quaternary structure, homodimer.

Its subcellular location is the cytoplasm. The enzyme catalyses tRNA(His) + L-histidine + ATP = L-histidyl-tRNA(His) + AMP + diphosphate + H(+). This is Histidine--tRNA ligase from Pectobacterium carotovorum subsp. carotovorum (strain PC1).